The following is a 317-amino-acid chain: Melanocyte-stimulating hormone receptor (317 aa).

The Extracellular portion of the chain corresponds to 1 to 37 (MSVQGPQRRLLGSLNSTSPAAPRLGLAANQTGPRCLE). N-linked (GlcNAc...) asparagine glycans are attached at residues asparagine 15 and asparagine 29. A helical membrane pass occupies residues 38–63 (VSVPDGLFLSLGLVSVVENVLVVAAI). Topologically, residues 64–72 (AKNRNLHSP) are cytoplasmic. The chain crosses the membrane as a helical span at residues 73–93 (MYYFICCLAVSDLLVSVSSVL). Residues 94 to 118 (ETAVMLLLEAGTLAGRAAVVQQLDD) lie on the Extracellular side of the membrane. A helical membrane pass occupies residues 119–140 (VIDVLVCGAMVSSLCFLGAIAV). At 141-163 (DRYISIFYALRYHSIVTLPRAWR) the chain is on the cytoplasmic side. The helical transmembrane segment at 164–183 (AISAIWVASVLSSTLFIAYY) threads the bilayer. The Extracellular portion of the chain corresponds to 184–191 (DHTAVLLC). Residues 192–211 (LVSFFVAMLVLMAVLYVHML) traverse the membrane as a helical segment. Over 212–240 (ARACQHARGIARLHKRQRPVHQGLGLKGA) the chain is Cytoplasmic. A helical transmembrane segment spans residues 241 to 266 (ATLTILLGIFFLCWGPFFLHLSLMVL). The Extracellular portion of the chain corresponds to 267–279 (CPRHPICGCVFKN). A helical membrane pass occupies residues 280 to 300 (FNLFLTLIICNSIVDPLIYAF). The Cytoplasmic portion of the chain corresponds to 301 to 317 (RSQELRKTLQEVLLCSW). Cysteine 315 carries the S-palmitoyl cysteine lipid modification.

It belongs to the G-protein coupled receptor 1 family. As to quaternary structure, interacts with MGRN1, but does not undergo MGRN1-mediated ubiquitination; this interaction competes with GNAS-binding and thus inhibits agonist-induced cAMP production. Interacts with OPN3; the interaction results in a decrease in MC1R-mediated cAMP signaling and ultimately a decrease in melanin production in melanocytes.

Its subcellular location is the cell membrane. Receptor for MSH (alpha, beta and gamma) and ACTH. The activity of this receptor is mediated by G proteins which activate adenylate cyclase. Mediates melanogenesis, the production of eumelanin (black/brown) and phaeomelanin (red/yellow), via regulation of cAMP signaling in melanocytes. In Panthera onca (Jaguar), this protein is Melanocyte-stimulating hormone receptor (MC1R).